A 319-amino-acid chain; its full sequence is tRNA uridine(34) hydroxylase (319 aa).

In terms of domain architecture, Rhodanese spans lysine 127–glutamate 221. The active-site Cysteine persulfide intermediate is cysteine 181.

The protein belongs to the TrhO family.

The enzyme catalyses uridine(34) in tRNA + AH2 + O2 = 5-hydroxyuridine(34) in tRNA + A + H2O. In terms of biological role, catalyzes oxygen-dependent 5-hydroxyuridine (ho5U) modification at position 34 in tRNAs. The chain is tRNA uridine(34) hydroxylase from Bacillus cereus (strain ATCC 10987 / NRS 248).